Here is a 182-residue protein sequence, read N- to C-terminus: Plasmolipin (182 aa).

At 1–35 the chain is on the cytoplasmic side; the sequence is MAEFPSKVSTRTSSPAQGVGASVSALRPDLGFVRS. Phosphoserine is present on Ser9. The region spanning 32–166 is the MARVEL domain; it reads FVRSALGVLA…SAFFSFQAWR (135 aa). A helical membrane pass occupies residues 36 to 56; sequence ALGVLALLQLALGLLVWALIA. At 57–68 the chain is on the extracellular side; the sequence is DTPYHLYPAYGW. A helical transmembrane segment spans residues 69–89; the sequence is VMFVAVFLWLVTIVFFIIYLF. Residues 90-99 lie on the Cytoplasmic side of the membrane; that stretch reads QLHMKLYMVP. A helical transmembrane segment spans residues 100 to 120; it reads WPLVLLIFFVAATVLYITAFI. Over 121 to 141 the chain is Extracellular; sequence ACAAAVDLTSLRGSRPYNQRS. A helical membrane pass occupies residues 142–162; sequence AASFFACLVMIAYGVSAFFSF. Residues 163 to 182 lie on the Cytoplasmic side of the membrane; it reads QAWRGVGSNAATSQMAGGYS.

Belongs to the MAL family. As to quaternary structure, forms oligomers. Post-translationally, phosphorylated.

It is found in the membrane. It localises to the cell membrane. The protein localises to the myelin membrane. The protein resides in the apical cell membrane. Its function is as follows. Main component of the myelin sheath that plays an important role in myelin membrane biogenesis and myelination. Plays an essential function in apical endocytosis. Regulates epithelial development through the regulation of apical endocytosis. Part of the intracellular machinery that mediates basolateral-to-apical transport of ICAM-1, an essential adhesion receptor in epithelial cells, from the subapical compartment in hepatic epithelial cells. The protein is Plasmolipin (Pllp) of Mus musculus (Mouse).